We begin with the raw amino-acid sequence, 545 residues long: Myotubularin-related protein 9 (545 aa).

M1 carries the post-translational modification N-acetylmethionine. Residues 4-99 (AELIKTPRVD…LNIASSIEAL (96 aa)) enclose the GRAM domain. One can recognise a Myotubularin phosphatase domain in the interval 123-498 (GWHSFLPEQE…QSLQLWEGIF (376 aa)). Residues 508 to 542 (LDEAYEEMVNIIEYNKELQAKVNVLRRQLAELETE) adopt a coiled-coil conformation.

Belongs to the protein-tyrosine phosphatase family. Non-receptor class myotubularin subfamily. Homodimer. Heterodimer (via C-terminus) with lipid phosphatase MTMR6 (via C-terminus). Heterodimer (via coiled coil domain) with lipid phosphatase MTMR7 (via C-terminus).

The protein localises to the cytoplasm. It is found in the cell projection. The protein resides in the ruffle membrane. Its subcellular location is the perinuclear region. It localises to the endoplasmic reticulum. In terms of biological role, acts as an adapter for myotubularin-related phosphatases. Increases lipid phosphatase MTMR6 catalytic activity, specifically towards phosphatidylinositol 3,5-bisphosphate, and MTMR6 binding affinity for phosphorylated phosphatidylinositols. Positively regulates lipid phosphatase MTMR7 catalytic activity. The formation of the MTMR6-MTMR9 complex, stabilizes both MTMR6 and MTMR9 protein levels. Plays a role in the late stages of macropinocytosis possibly by regulating MTMR6-mediated dephosphorylation of phosphatidylinositol 3-phosphate in membrane ruffles. Negatively regulates DNA damage-induced apoptosis, in part via its association with MTMR6. Does not bind mono-, di- and tri-phosphorylated phosphatidylinositols, phosphatidic acid and phosphatidylserine. The chain is Myotubularin-related protein 9 (Mtmr9) from Mus musculus (Mouse).